Reading from the N-terminus, the 204-residue chain is Leucyl/phenylalanyl-tRNA--protein transferase (204 aa).

This sequence belongs to the L/F-transferase family.

It localises to the cytoplasm. It catalyses the reaction N-terminal L-lysyl-[protein] + L-leucyl-tRNA(Leu) = N-terminal L-leucyl-L-lysyl-[protein] + tRNA(Leu) + H(+). The catalysed reaction is N-terminal L-arginyl-[protein] + L-leucyl-tRNA(Leu) = N-terminal L-leucyl-L-arginyl-[protein] + tRNA(Leu) + H(+). It carries out the reaction L-phenylalanyl-tRNA(Phe) + an N-terminal L-alpha-aminoacyl-[protein] = an N-terminal L-phenylalanyl-L-alpha-aminoacyl-[protein] + tRNA(Phe). In terms of biological role, functions in the N-end rule pathway of protein degradation where it conjugates Leu, Phe and, less efficiently, Met from aminoacyl-tRNAs to the N-termini of proteins containing an N-terminal arginine or lysine. The sequence is that of Leucyl/phenylalanyl-tRNA--protein transferase from Brucella abortus (strain 2308).